Here is a 374-residue protein sequence, read N- to C-terminus: Putative F-box protein At3g16590 (374 aa).

The F-box domain occupies 1-45; it reads MPTKLPLELEDEILLRVPPLSLTRFRTVCKRWNTLFNDQRFINNH.

The polypeptide is Putative F-box protein At3g16590 (Arabidopsis thaliana (Mouse-ear cress)).